The chain runs to 333 residues: MANIYYDSDCDLNSLKGKTIAVIGYGSQGHAQAQNMKDSGLKVIIGLKEGSKSIQDAKNAGFEVYSVSEASQKADIIQILAPDTIQADLYKKDIEPNLKKGDALVFSHGFNIHYDFIKPPKEVDVYMVAPKGPGHLVRRVYTEGGGVPCLIAIYQDSSGEAKKRALAHAAGVGGGRAGILETSFREETETDLFGEQVVLCGGLSNLIMAGFETLTEAGYDPEIAYFECLHEVKLITDLIYEGGLARMRFSISDTAEYGDYVSGPRVIDPGVKQRMKEVLNDIQKDKGAKFATNWMAETKAGYPNFKNMRDKNASHPIESVGKKLRSMMKWLSK.

In terms of domain architecture, KARI N-terminal Rossmann spans Ala-2–Thr-182. Residues Tyr-25 to Gln-28, Lys-48, Ser-51, Ser-53, and Asp-83 to Gln-86 contribute to the NADP(+) site. The active site involves His-108. Gly-134 is a binding site for NADP(+). The KARI C-terminal knotted domain occupies Ser-183 to Leu-331. The Mg(2+) site is built by Asp-191, Glu-195, Glu-227, and Glu-231. Ser-252 serves as a coordination point for substrate.

The protein belongs to the ketol-acid reductoisomerase family. Mg(2+) is required as a cofactor.

It catalyses the reaction (2R)-2,3-dihydroxy-3-methylbutanoate + NADP(+) = (2S)-2-acetolactate + NADPH + H(+). The enzyme catalyses (2R,3R)-2,3-dihydroxy-3-methylpentanoate + NADP(+) = (S)-2-ethyl-2-hydroxy-3-oxobutanoate + NADPH + H(+). Its pathway is amino-acid biosynthesis; L-isoleucine biosynthesis; L-isoleucine from 2-oxobutanoate: step 2/4. It functions in the pathway amino-acid biosynthesis; L-valine biosynthesis; L-valine from pyruvate: step 2/4. Functionally, involved in the biosynthesis of branched-chain amino acids (BCAA). Catalyzes an alkyl-migration followed by a ketol-acid reduction of (S)-2-acetolactate (S2AL) to yield (R)-2,3-dihydroxy-isovalerate. In the isomerase reaction, S2AL is rearranged via a Mg-dependent methyl migration to produce 3-hydroxy-3-methyl-2-ketobutyrate (HMKB). In the reductase reaction, this 2-ketoacid undergoes a metal-dependent reduction by NADPH to yield (R)-2,3-dihydroxy-isovalerate. In Leptospira interrogans serogroup Icterohaemorrhagiae serovar copenhageni (strain Fiocruz L1-130), this protein is Ketol-acid reductoisomerase (NADP(+)).